Here is a 378-residue protein sequence, read N- to C-terminus: Small ribosomal subunit protein bS1 (378 aa).

S1 motif domains are found at residues 1 to 66 (ETVT…VSRR), 87 to 155 (GMEV…LGLK), 172 to 242 (GTKL…LGLK), 259 to 329 (GDRV…LGVK), and 346 to 378 (GAIV…ASEA).

The protein belongs to the bacterial ribosomal protein bS1 family.

Its function is as follows. Binds mRNA; thus facilitating recognition of the initiation point. It is needed to translate mRNA with a short Shine-Dalgarno (SD) purine-rich sequence. The polypeptide is Small ribosomal subunit protein bS1 (rpsA) (Providencia sp).